Reading from the N-terminus, the 525-residue chain is G-protein regulator 2 (525 aa).

The GoLoco domain maps to proline 424 to leucine 445. The interval threonine 489–lysine 525 is disordered.

As to quaternary structure, interacts with gpr-1; gpr-1 forms a complex with lin-5 and GDP-bound goa-1.

It localises to the cytoplasm. It is found in the cell cortex. The protein localises to the cytoskeleton. The protein resides in the spindle. In terms of biological role, in the 1-cell embryo, probably together with gpr-1, controls nuclear rotation and spindle elongation during mitosis. Complex of gpr-1 and gpr-2, in association with lin-5, activates G-protein signaling to affect mitotic spindle force. Polarity determinants (par genes) may regulate lin-5/gpr-1/gpr-2/goa-1 locally to create the asymmetric forces that drive spindle movement. The protein is G-protein regulator 2 (gpr-2) of Caenorhabditis elegans.